Reading from the N-terminus, the 558-residue chain is ATP synthase subunit alpha (558 aa).

An ATP-binding site is contributed by 172 to 179 (GDRKTGKT). A disordered region spans residues 536–558 (ESVKVHQAIPAKTSEKSKNSTPR). Over residues 548 to 558 (TSEKSKNSTPR) the composition is skewed to basic and acidic residues.

The protein belongs to the ATPase alpha/beta chains family. As to quaternary structure, F-type ATPases have 2 components, CF(1) - the catalytic core - and CF(0) - the membrane proton channel. CF(1) has five subunits: alpha(3), beta(3), gamma(1), delta(1), epsilon(1). CF(0) has three main subunits: a(1), b(2) and c(9-12). The alpha and beta chains form an alternating ring which encloses part of the gamma chain. CF(1) is attached to CF(0) by a central stalk formed by the gamma and epsilon chains, while a peripheral stalk is formed by the delta and b chains.

Its subcellular location is the cell membrane. It carries out the reaction ATP + H2O + 4 H(+)(in) = ADP + phosphate + 5 H(+)(out). Functionally, produces ATP from ADP in the presence of a proton gradient across the membrane. The alpha chain is a regulatory subunit. The chain is ATP synthase subunit alpha from Mycobacterium leprae (strain Br4923).